The chain runs to 483 residues: UDP-N-acetylmuramoyl-L-alanyl-D-glutamate--2,6-diaminopimelate ligase (483 aa).

S30 provides a ligand contact to UDP-N-acetyl-alpha-D-muramoyl-L-alanyl-D-glutamate. 109–115 (GTNGKTT) is an ATP binding site. Residues 151 to 152 (TT), S178, and R186 contribute to the UDP-N-acetyl-alpha-D-muramoyl-L-alanyl-D-glutamate site. The residue at position 218 (K218) is an N6-carboxylysine. Residues R380, 403 to 406 (DNPR), G453, and E457 each bind meso-2,6-diaminopimelate. A Meso-diaminopimelate recognition motif motif is present at residues 403–406 (DNPR).

Belongs to the MurCDEF family. MurE subfamily. It depends on Mg(2+) as a cofactor. Carboxylation is probably crucial for Mg(2+) binding and, consequently, for the gamma-phosphate positioning of ATP.

The protein resides in the cytoplasm. It catalyses the reaction UDP-N-acetyl-alpha-D-muramoyl-L-alanyl-D-glutamate + meso-2,6-diaminopimelate + ATP = UDP-N-acetyl-alpha-D-muramoyl-L-alanyl-gamma-D-glutamyl-meso-2,6-diaminopimelate + ADP + phosphate + H(+). Its pathway is cell wall biogenesis; peptidoglycan biosynthesis. Its function is as follows. Catalyzes the addition of meso-diaminopimelic acid to the nucleotide precursor UDP-N-acetylmuramoyl-L-alanyl-D-glutamate (UMAG) in the biosynthesis of bacterial cell-wall peptidoglycan. In Chlamydia muridarum (strain MoPn / Nigg), this protein is UDP-N-acetylmuramoyl-L-alanyl-D-glutamate--2,6-diaminopimelate ligase.